Reading from the N-terminus, the 62-residue chain is Short neurotoxin 1 (62 aa).

Residues 1 to 17 are compositionally biased toward polar residues; the sequence is MQCCNQQSSQPKTTTTC. The interval 1 to 20 is disordered; it reads MQCCNQQSSQPKTTTTCPGG. Intrachain disulfides connect Cys3/Cys24, Cys17/Cys41, Cys43/Cys54, and Cys55/Cys60.

This sequence belongs to the three-finger toxin family. Short-chain subfamily. Type I alpha-neurotoxin sub-subfamily. As to expression, expressed by the venom gland.

The protein resides in the secreted. Functionally, binds to muscle nicotinic acetylcholine receptor (nAChR) and inhibit acetylcholine from binding to the receptor, thereby impairing neuromuscular transmission. In Acanthophis antarcticus (Common death adder), this protein is Short neurotoxin 1.